A 107-amino-acid polypeptide reads, in one-letter code: Nucleoid-associated protein RC1337 (107 aa).

The protein belongs to the YbaB/EbfC family. In terms of assembly, homodimer.

The protein localises to the cytoplasm. The protein resides in the nucleoid. Its function is as follows. Binds to DNA and alters its conformation. May be involved in regulation of gene expression, nucleoid organization and DNA protection. This chain is Nucleoid-associated protein RC1337, found in Rickettsia conorii (strain ATCC VR-613 / Malish 7).